Reading from the N-terminus, the 158-residue chain is MPKNLTPILEAIEPVIIGHDCELVDLEYVKEKSQDYLRIYVDKQPNGIDIETIAELSELVGEKLDSMQPDPLPDPYILELSSPGLERPIKKEQDWEKAKGQYIHVGLYQKLEGEKVFEGHLLDLDDQEIKLEIKIKTRRKQLTIPRKQIASARFAIEF.

It belongs to the RimP family.

Its subcellular location is the cytoplasm. Functionally, required for maturation of 30S ribosomal subunits. The chain is Ribosome maturation factor RimP from Lactobacillus delbrueckii subsp. bulgaricus (strain ATCC 11842 / DSM 20081 / BCRC 10696 / JCM 1002 / NBRC 13953 / NCIMB 11778 / NCTC 12712 / WDCM 00102 / Lb 14).